We begin with the raw amino-acid sequence, 335 residues long: Mycobacterial beta-ketoacyl-[acyl-carrier-protein] synthase III (335 aa).

Active-site residues include cysteine 122 and histidine 258. The interval 259–263 (QANSR) is ACP-binding. Asparagine 289 is an active-site residue.

The protein belongs to the thiolase-like superfamily. FabH family. Homodimer.

It is found in the cytoplasm. The enzyme catalyses malonyl-[ACP] + dodecanoyl-CoA + H(+) = 3-oxotetradecanoyl-[ACP] + CO2 + CoA. It functions in the pathway lipid metabolism; fatty acid biosynthesis. It participates in lipid metabolism; mycolic acid biosynthesis. Catalyzes the condensation reaction of fatty acid synthesis by the addition to an acyl acceptor of two carbons from malonyl-ACP. Catalyzes the first condensation reaction which initiates fatty acid synthesis and may therefore play a role in governing the total rate of fatty acid production. Possesses both acetoacetyl-ACP synthase and acetyl transacylase activities. Its substrate specificity determines the biosynthesis of branched-chain and/or straight-chain of fatty acids. This Mycobacterium marinum (strain ATCC BAA-535 / M) protein is Mycobacterial beta-ketoacyl-[acyl-carrier-protein] synthase III.